The following is a 491-amino-acid chain: Glutamate--tRNA ligase (491 aa).

The short motif at 14-24 (PSPTGSPHVGL) is the 'HIGH' region element. The Zn(2+) site is built by C111, C113, C136, and D138. A 'KMSKS' region motif is present at residues 257–261 (KLSKR). K260 serves as a coordination point for ATP.

This sequence belongs to the class-I aminoacyl-tRNA synthetase family. Glutamate--tRNA ligase type 1 subfamily. Monomer. Zn(2+) is required as a cofactor.

Its subcellular location is the cytoplasm. The catalysed reaction is tRNA(Glu) + L-glutamate + ATP = L-glutamyl-tRNA(Glu) + AMP + diphosphate. Its function is as follows. Catalyzes the attachment of glutamate to tRNA(Glu) in a two-step reaction: glutamate is first activated by ATP to form Glu-AMP and then transferred to the acceptor end of tRNA(Glu). The polypeptide is Glutamate--tRNA ligase (Nocardioides sp. (strain ATCC BAA-499 / JS614)).